Here is a 265-residue protein sequence, read N- to C-terminus: Ribosomal RNA small subunit methyltransferase A (265 aa).

S-adenosyl-L-methionine is bound by residues His-13, Leu-15, Gly-40, Glu-61, Asp-85, and Asn-103.

The protein belongs to the class I-like SAM-binding methyltransferase superfamily. rRNA adenine N(6)-methyltransferase family. RsmA subfamily.

The protein localises to the cytoplasm. The enzyme catalyses adenosine(1518)/adenosine(1519) in 16S rRNA + 4 S-adenosyl-L-methionine = N(6)-dimethyladenosine(1518)/N(6)-dimethyladenosine(1519) in 16S rRNA + 4 S-adenosyl-L-homocysteine + 4 H(+). Its function is as follows. Specifically dimethylates two adjacent adenosines (A1518 and A1519) in the loop of a conserved hairpin near the 3'-end of 16S rRNA in the 30S particle. May play a critical role in biogenesis of 30S subunits. This chain is Ribosomal RNA small subunit methyltransferase A, found in Bordetella bronchiseptica (strain ATCC BAA-588 / NCTC 13252 / RB50) (Alcaligenes bronchisepticus).